Consider the following 124-residue polypeptide: MADDLKRFLYKKLPSVEGLHAIVVSDRDGVPVIKVANDSAPEHALRPGFLSTFALATDQGSKLGLSKNKSIICYYNTYQVVQFNRLPLVVSFIASSSANTGLIVSLEKELAPLFEELIKVVEVS.

The segment at 57-70 (TDQGSKLGLSKNKS) is required for interaction with LAMTOR2.

The protein belongs to the LAMTOR3 family. As to quaternary structure, part of the Ragulator complex composed of LAMTOR1, LAMTOR2, LAMTOR3, LAMTOR4 and LAMTOR5. LAMTOR4 and LAMTOR5 form a heterodimer that interacts, through LAMTOR1, with a LAMTOR2, LAMTOR3 heterodimer. The Ragulator complex interacts with both the mTORC1 complex and heterodimers constituted of the Rag GTPases RagA/RRAGA, RagB/RRAGB, RagC/RRAGC and RagD/RRAGD; regulated by amino acid availability. The Ragulator complex interacts with SLC38A9; the probable amino acid sensor. Interacts with LAMTOR1 and LAMTOR2; the interaction is direct. Component of the lysosomal folliculin complex (LFC), composed of FLCN, FNIP1 (or FNIP2), RagA/RRAGA or RagB/RRAGB GDP-bound, RagC/RRAGC or RagD/RRAGD GTP-bound, and Ragulator. Interacts with MAP2K1/MEK1 and MAPK2. Interacts with MORG1.

The protein localises to the late endosome membrane. Functionally, as part of the Ragulator complex it is involved in amino acid sensing and activation of mTORC1, a signaling complex promoting cell growth in response to growth factors, energy levels, and amino acids. Activated by amino acids through a mechanism involving the lysosomal V-ATPase, the Ragulator plays a dual role for the small GTPases Rag (RagA/RRAGA, RagB/RRAGB, RagC/RRAGC and/or RagD/RRAGD): it (1) acts as a guanine nucleotide exchange factor (GEF), activating the small GTPases Rag and (2) mediates recruitment of Rag GTPases to the lysosome membrane. Activated Ragulator and Rag GTPases function as a scaffold recruiting mTORC1 to lysosomes where it is in turn activated. Adapter protein that enhances the efficiency of the MAP kinase cascade facilitating the activation of MAPK2. The protein is Ragulator complex protein LAMTOR3 (Lamtor3) of Mus musculus (Mouse).